Here is a 596-residue protein sequence, read N- to C-terminus: NADH-quinone oxidoreductase subunit C/D (596 aa).

Residues 1–186 form an NADH dehydrogenase I subunit C region; it reads MTDLTAQDAA…DPFELTKAKQ (186 aa). Positions 210-596 are NADH dehydrogenase I subunit D; it reads DFMFLNLGPN…IDFVMSDVDR (387 aa).

It in the N-terminal section; belongs to the complex I 30 kDa subunit family. The protein in the C-terminal section; belongs to the complex I 49 kDa subunit family. In terms of assembly, NDH-1 is composed of 13 different subunits. Subunits NuoB, CD, E, F, and G constitute the peripheral sector of the complex.

The protein localises to the cell inner membrane. The enzyme catalyses a quinone + NADH + 5 H(+)(in) = a quinol + NAD(+) + 4 H(+)(out). Its function is as follows. NDH-1 shuttles electrons from NADH, via FMN and iron-sulfur (Fe-S) centers, to quinones in the respiratory chain. The immediate electron acceptor for the enzyme in this species is believed to be ubiquinone. Couples the redox reaction to proton translocation (for every two electrons transferred, four hydrogen ions are translocated across the cytoplasmic membrane), and thus conserves the redox energy in a proton gradient. The sequence is that of NADH-quinone oxidoreductase subunit C/D from Salmonella choleraesuis (strain SC-B67).